A 63-amino-acid polypeptide reads, in one-letter code: DNA-directed RNA polymerase 7 kDa subunit (63 aa).

It belongs to the poxviridae DNA-directed RNA polymerase 7 kDa subunit family. The DNA-dependent RNA polymerase used for intermediate and late genes expression consists of eight subunits 147 kDa, 133 kDa, 35 kDa, 30 kDa, 22 kDa, 19 kDa, 18 kDa and 7 kDa totalling more than 500 kDa in mass. The same holoenzyme, with the addition of the transcription-specificity factor RAP94, is used for early gene expression.

Its subcellular location is the virion. It catalyses the reaction RNA(n) + a ribonucleoside 5'-triphosphate = RNA(n+1) + diphosphate. Part of the DNA-dependent RNA polymerase which catalyzes the transcription of viral DNA into RNA using the four ribonucleoside triphosphates as substrates. Responsible for the transcription of early, intermediate and late genes. DNA-dependent RNA polymerase associates with the early transcription factor (ETF) thereby allowing the early genes transcription. Late transcription, and probably also intermediate transcription, require newly synthesized RNA polymerase. The chain is DNA-directed RNA polymerase 7 kDa subunit (RPO7) from Rabbit fibroma virus (strain Kasza) (RFV).